Consider the following 369-residue polypeptide: Queuine tRNA-ribosyltransferase (369 aa).

Asp-89 (proton acceptor) is an active-site residue. Substrate contacts are provided by residues 89–93 (DSGGF), Asp-142, Gln-184, and Gly-211. Positions 242–248 (GGGSPEL) are RNA binding. The active-site Nucleophile is the Asp-261. Residues 266 to 270 (TRIAR) are RNA binding; important for wobble base 34 recognition. Zn(2+) contacts are provided by Cys-299, Cys-301, Cys-304, and His-330.

Belongs to the queuine tRNA-ribosyltransferase family. As to quaternary structure, homodimer. Within each dimer, one monomer is responsible for RNA recognition and catalysis, while the other monomer binds to the replacement base PreQ1. Zn(2+) is required as a cofactor.

It catalyses the reaction 7-aminomethyl-7-carbaguanine + guanosine(34) in tRNA = 7-aminomethyl-7-carbaguanosine(34) in tRNA + guanine. It participates in tRNA modification; tRNA-queuosine biosynthesis. Functionally, catalyzes the base-exchange of a guanine (G) residue with the queuine precursor 7-aminomethyl-7-deazaguanine (PreQ1) at position 34 (anticodon wobble position) in tRNAs with GU(N) anticodons (tRNA-Asp, -Asn, -His and -Tyr). Catalysis occurs through a double-displacement mechanism. The nucleophile active site attacks the C1' of nucleotide 34 to detach the guanine base from the RNA, forming a covalent enzyme-RNA intermediate. The proton acceptor active site deprotonates the incoming PreQ1, allowing a nucleophilic attack on the C1' of the ribose to form the product. After dissociation, two additional enzymatic reactions on the tRNA convert PreQ1 to queuine (Q), resulting in the hypermodified nucleoside queuosine (7-(((4,5-cis-dihydroxy-2-cyclopenten-1-yl)amino)methyl)-7-deazaguanosine). In Thermotoga maritima (strain ATCC 43589 / DSM 3109 / JCM 10099 / NBRC 100826 / MSB8), this protein is Queuine tRNA-ribosyltransferase.